Here is a 294-residue protein sequence, read N- to C-terminus: 4-hydroxy-tetrahydrodipicolinate synthase (294 aa).

Pyruvate is bound at residue threonine 47. Residue tyrosine 135 is the Proton donor/acceptor of the active site. Lysine 163 acts as the Schiff-base intermediate with substrate in catalysis. Pyruvate is bound at residue isoleucine 205.

This sequence belongs to the DapA family. As to quaternary structure, homotetramer; dimer of dimers.

It is found in the cytoplasm. It catalyses the reaction L-aspartate 4-semialdehyde + pyruvate = (2S,4S)-4-hydroxy-2,3,4,5-tetrahydrodipicolinate + H2O + H(+). It functions in the pathway amino-acid biosynthesis; L-lysine biosynthesis via DAP pathway; (S)-tetrahydrodipicolinate from L-aspartate: step 3/4. Its function is as follows. Catalyzes the condensation of (S)-aspartate-beta-semialdehyde [(S)-ASA] and pyruvate to 4-hydroxy-tetrahydrodipicolinate (HTPA). This chain is 4-hydroxy-tetrahydrodipicolinate synthase, found in Rickettsia typhi (strain ATCC VR-144 / Wilmington).